A 376-amino-acid chain; its full sequence is Alanine racemase (376 aa).

Lys-36 acts as the Proton acceptor; specific for D-alanine in catalysis. Position 36 is an N6-(pyridoxal phosphate)lysine (Lys-36). Arg-134 contributes to the substrate binding site. The active-site Proton acceptor; specific for L-alanine is the Tyr-266. Met-314 serves as a coordination point for substrate.

This sequence belongs to the alanine racemase family. It depends on pyridoxal 5'-phosphate as a cofactor.

It catalyses the reaction L-alanine = D-alanine. It participates in amino-acid biosynthesis; D-alanine biosynthesis; D-alanine from L-alanine: step 1/1. In terms of biological role, catalyzes the interconversion of L-alanine and D-alanine. May also act on other amino acids. The sequence is that of Alanine racemase (alr) from Nitratidesulfovibrio vulgaris (strain ATCC 29579 / DSM 644 / CCUG 34227 / NCIMB 8303 / VKM B-1760 / Hildenborough) (Desulfovibrio vulgaris).